Here is a 243-residue protein sequence, read N- to C-terminus: ATP synthase subunit b, mitochondrial (243 aa).

Belongs to the eukaryotic ATPase B chain family. As to quaternary structure, F-type ATPases have 2 components, CF(1) - the catalytic core - and CF(0) - the membrane proton channel. CF(1) has five subunits: alpha(3), beta(3), gamma(1), delta(1), epsilon(1). CF(0) has three main subunits: a, b and c.

It localises to the mitochondrion. The protein localises to the mitochondrion inner membrane. Functionally, mitochondrial membrane ATP synthase (F(1)F(0) ATP synthase or Complex V) produces ATP from ADP in the presence of a proton gradient across the membrane which is generated by electron transport complexes of the respiratory chain. F-type ATPases consist of two structural domains, F(1) - containing the extramembraneous catalytic core, and F(0) - containing the membrane proton channel, linked together by a central stalk and a peripheral stalk. During catalysis, ATP synthesis in the catalytic domain of F(1) is coupled via a rotary mechanism of the central stalk subunits to proton translocation. Part of the complex F(0) domain and the peripheric stalk, which acts as a stator to hold the catalytic alpha(3)beta(3) subcomplex and subunit a/ATP6 static relative to the rotary elements. In Drosophila melanogaster (Fruit fly), this protein is ATP synthase subunit b, mitochondrial.